The sequence spans 475 residues: MKKLKINYLFIGILTLLLAAALWPSIPWFGKTENHIAAIQARGVLRVSTIDSPLTYSVINGKKYGLDYELAQQFANYLGVKLKVTVRQNISQLFDDLDNGNADLLAAGLVYDSARVKNYQPGPMYYSVSQQLVYRVGQYRPRSLATVNENQLTIAPGHVVVNDLQRLKETKFPDLSWKVDDKKGSTTLLEEVISGKLDYTIADSVAISLFQRVHPELAVALDVTDEQPVTWFSRLDDDNTLSAALLDFFNSINEDGSLARIEEKYLGHGDDFDYVDTRSFLRAVDNVLPELEPLFKKYAKEIDWRLLAAISYQESHWDPLATSPTGVRGLMMLTKNTAQSLGLTDRTDAEQSISGGARYLEDMMAKVPETVPEDERIWFALAAYNMGYAHMLDARSLTVKTKGNPDSWTDVKQRLPLLSQKPYYSKLTYGYARGHEAYAYVENIRKYQISLVGYLQEKEKQEAEAMKLAQDYPAV.

The N-terminal stretch at 1 to 30 (MKKLKINYLFIGILTLLLAAALWPSIPWFG) is a signal peptide. A non-LT domain region spans residues 31-269 (KTENHIAAIQ…RIEEKYLGHG (239 aa)). An LT domain region spans residues 270–475 (DDFDYVDTRS…MKLAQDYPAV (206 aa)). Glu-314 is an active-site residue.

The protein in the N-terminal section; belongs to the bacterial solute-binding protein 3 family. It in the C-terminal section; belongs to the transglycosylase Slt family.

The protein resides in the cell outer membrane. It catalyses the reaction Exolytic cleavage of the (1-&gt;4)-beta-glycosidic linkage between N-acetylmuramic acid (MurNAc) and N-acetylglucosamine (GlcNAc) residues in peptidoglycan, from either the reducing or the non-reducing ends of the peptidoglycan chains, with concomitant formation of a 1,6-anhydrobond in the MurNAc residue.. In terms of biological role, murein-degrading enzyme that degrades murein glycan strands and insoluble, high-molecular weight murein sacculi, with the concomitant formation of a 1,6-anhydromuramoyl product. Lytic transglycosylases (LTs) play an integral role in the metabolism of the peptidoglycan (PG) sacculus. Their lytic action creates space within the PG sacculus to allow for its expansion as well as for the insertion of various structures such as secretion systems and flagella. The sequence is that of Membrane-bound lytic murein transglycosylase F from Salmonella typhi.